Consider the following 299-residue polypeptide: tRNA dimethylallyltransferase (299 aa).

An ATP-binding site is contributed by 13 to 20; that stretch reads GPTASGKT. 15–20 is a substrate binding site; sequence TASGKT. Residues 38–41 form an interaction with substrate tRNA region; sequence DSRQ.

Belongs to the IPP transferase family. In terms of assembly, monomer. The cofactor is Mg(2+).

It catalyses the reaction adenosine(37) in tRNA + dimethylallyl diphosphate = N(6)-dimethylallyladenosine(37) in tRNA + diphosphate. Its function is as follows. Catalyzes the transfer of a dimethylallyl group onto the adenine at position 37 in tRNAs that read codons beginning with uridine, leading to the formation of N6-(dimethylallyl)adenosine (i(6)A). The sequence is that of tRNA dimethylallyltransferase from Synechococcus sp. (strain CC9605).